The following is a 478-amino-acid chain: Probable glycine dehydrogenase (decarboxylating) subunit 2 (478 aa).

Lysine 264 is modified (N6-(pyridoxal phosphate)lysine).

The protein belongs to the GcvP family. C-terminal subunit subfamily. As to quaternary structure, the glycine cleavage system is composed of four proteins: P, T, L and H. In this organism, the P 'protein' is a heterodimer of two subunits. It depends on pyridoxal 5'-phosphate as a cofactor.

It catalyses the reaction N(6)-[(R)-lipoyl]-L-lysyl-[glycine-cleavage complex H protein] + glycine + H(+) = N(6)-[(R)-S(8)-aminomethyldihydrolipoyl]-L-lysyl-[glycine-cleavage complex H protein] + CO2. The glycine cleavage system catalyzes the degradation of glycine. The P protein binds the alpha-amino group of glycine through its pyridoxal phosphate cofactor; CO(2) is released and the remaining methylamine moiety is then transferred to the lipoamide cofactor of the H protein. This chain is Probable glycine dehydrogenase (decarboxylating) subunit 2, found in Endomicrobium trichonymphae.